A 545-amino-acid chain; its full sequence is ATP synthase subunit alpha (545 aa).

173-180 (GDRQTGKT) serves as a coordination point for ATP.

The protein belongs to the ATPase alpha/beta chains family. F-type ATPases have 2 components, CF(1) - the catalytic core - and CF(0) - the membrane proton channel. CF(1) has five subunits: alpha(3), beta(3), gamma(1), delta(1), epsilon(1). CF(0) has three main subunits: a(1), b(2) and c(9-12). The alpha and beta chains form an alternating ring which encloses part of the gamma chain. CF(1) is attached to CF(0) by a central stalk formed by the gamma and epsilon chains, while a peripheral stalk is formed by the delta and b chains.

It is found in the cell membrane. It carries out the reaction ATP + H2O + 4 H(+)(in) = ADP + phosphate + 5 H(+)(out). In terms of biological role, produces ATP from ADP in the presence of a proton gradient across the membrane. The alpha chain is a regulatory subunit. This Clavibacter michiganensis subsp. michiganensis (strain NCPPB 382) protein is ATP synthase subunit alpha.